Consider the following 355-residue polypeptide: Probable butyrate kinase (355 aa).

This sequence belongs to the acetokinase family.

The protein resides in the cytoplasm. The catalysed reaction is butanoate + ATP = butanoyl phosphate + ADP. This is Probable butyrate kinase from Listeria monocytogenes serotype 4a (strain HCC23).